Reading from the N-terminus, the 286-residue chain is tRNA (guanine-N(7)-)-methyltransferase (286 aa).

Phosphoserine occurs at positions 7 and 59. Residues Gly-103, 126–127 (EI), 161–162 (NA), and Cys-181 contribute to the S-adenosyl-L-methionine site. Asp-184 is a catalytic residue. 259-261 (TEE) contacts S-adenosyl-L-methionine.

The protein belongs to the class I-like SAM-binding methyltransferase superfamily. TrmB family. Forms a complex with TRM82.

It is found in the nucleus. It catalyses the reaction guanosine(46) in tRNA + S-adenosyl-L-methionine = N(7)-methylguanosine(46) in tRNA + S-adenosyl-L-homocysteine. The protein operates within tRNA modification; N(7)-methylguanine-tRNA biosynthesis. Its function is as follows. Methyltransferase that catalyzes the formation of N(7)-methylguanine at position 46 (m7G46) in tRNA, a modification required to maintain stability of tRNAs; its absence resulting in tRNA decay. Both the D-stem and T-stem structures of tRNAs are required for efficient methyltransferase activity. This chain is tRNA (guanine-N(7)-)-methyltransferase, found in Saccharomyces cerevisiae (strain RM11-1a) (Baker's yeast).